The primary structure comprises 471 residues: 5-hydroxytryptamine receptor 2A (471 aa).

Residues M1–L80 lie on the Extracellular side of the membrane. N-linked (GlcNAc...) asparagine glycans are attached at residues N8, N38, N44, N51, and N54. A helical membrane pass occupies residues T81–M97. The Cytoplasmic segment spans residues A98–Y111. A helical membrane pass occupies residues F112–Y137. Over G138 to K146 the chain is Extracellular. Residues L147–L171 form a helical membrane-spanning segment. The cysteines at positions 148 and 227 are disulfide-linked. D155 lines the serotonin pocket. A DRY motif; important for ligand-induced conformation changes motif is present at residues D172–Y174. At D172–K191 the chain is on the cytoplasmic side. The chain crosses the membrane as a helical span at residues A192–L215. The Extracellular segment spans residues Q216–D232. The chain crosses the membrane as a helical span at residues N233–I258. At K259–C322 the chain is on the cytoplasmic side. S280 bears the Phosphoserine mark. The helical transmembrane segment at K323 to I348 threads the bilayer. Position 343 (N343) interacts with serotonin. Cysteines 349 and 353 form a disulfide. Topologically, residues C349–N356 are extracellular. Residues V357–L382 form a helical membrane-spanning segment. The short motif at N376 to Y380 is the NPxxY motif; important for ligand-induced conformation changes and signaling element. Topologically, residues F383–V471 are cytoplasmic. The short motif at S469–V471 is the PDZ-binding element.

The protein belongs to the G-protein coupled receptor 1 family. As to quaternary structure, interacts (via C-terminus) with MPDZ and PATJ. May interact (via C-terminus) with MPP3, PRDX6, DLG4, DLG1, CASK, APBA1 and MAGI2. Interacts with GRM2 and DRD2; this may affect signaling. In terms of tissue distribution, detected in adult intestine, especially in mucosal epithelium, longitudinal and circular layers of muscularis externa and myenteric plexuses. Highly expressed in Paneth cells, and detected at lower levels in enterocytes (at protein level). Detected in brain cortex.

The protein resides in the cell membrane. Its subcellular location is the cell projection. It localises to the axon. It is found in the cytoplasmic vesicle. The protein localises to the membrane. The protein resides in the caveola. Its subcellular location is the dendrite. It localises to the presynapse. With respect to regulation, G-protein coupled receptor activity is regulated by lipids: oleamide increases HTR2A-mediated activity. G-protein coupled receptor for 5-hydroxytryptamine (serotonin). Also functions as a receptor for various drugs and psychoactive substances, including mescaline, psilocybin, 1-(2,5-dimethoxy-4-iodophenyl)-2-aminopropane (DOI) and lysergic acid diethylamide (LSD). Ligand binding causes a conformation change that triggers signaling via guanine nucleotide-binding proteins (G proteins) and modulates the activity of downstream effectors. HTR2A is coupled to G(q)/G(11) G alpha proteins and activates phospholipase C-beta, releasing diacylglycerol (DAG) and inositol 1,4,5-trisphosphate (IP3) second messengers that modulate the activity of phosphatidylinositol 3-kinase and promote the release of Ca(2+) ions from intracellular stores, respectively. Beta-arrestin family members inhibit signaling via G proteins and mediate activation of alternative signaling pathways. Affects neural activity, perception, cognition and mood. Plays a role in the regulation of behavior, including responses to anxiogenic situations and psychoactive substances. Plays a role in intestinal smooth muscle contraction, and may play a role in arterial vasoconstriction. This Rattus norvegicus (Rat) protein is 5-hydroxytryptamine receptor 2A (Htr2a).